Reading from the N-terminus, the 506-residue chain is Maturase K (506 aa).

The protein belongs to the intron maturase 2 family. MatK subfamily.

It is found in the plastid. Its subcellular location is the chloroplast. In terms of biological role, usually encoded in the trnK tRNA gene intron. Probably assists in splicing its own and other chloroplast group II introns. In Trifolium gracilentum (Pinpoint clover), this protein is Maturase K.